The chain runs to 300 residues: MQFHSSSALVTPFKKDLSVDEAVYEALIKRQILQGMDACVPVGTTGESATLTHKEHMHCIEIAIETCKNTKTPSNSRMKVLAGVGSNATSESLSLAKFAQKVGADAILCVSPYYNRPTQQGLFEHYKTIAQSVEIPVMLYDVPSRTGVSIEVPTALKLFREVPNIKAIKEASGSLKRVAELHCYEKDFHIFSGEDSLNHSIMFSGGKGVVSVTGNLMPNLISQMVNCALKHEYQQALEIQDKLFSLHQALFVETNPIPIKMAMHLAGLIENPSYRLPLVAPSKETIKLLEKTLQQYEVIA.

T45 is a binding site for pyruvate. The active-site Proton donor/acceptor is Y140. Residue K169 is the Schiff-base intermediate with substrate of the active site. V210 lines the pyruvate pocket.

It belongs to the DapA family. In terms of assembly, homotetramer; dimer of dimers.

It localises to the cytoplasm. The catalysed reaction is L-aspartate 4-semialdehyde + pyruvate = (2S,4S)-4-hydroxy-2,3,4,5-tetrahydrodipicolinate + H2O + H(+). It participates in amino-acid biosynthesis; L-lysine biosynthesis via DAP pathway; (S)-tetrahydrodipicolinate from L-aspartate: step 3/4. Catalyzes the condensation of (S)-aspartate-beta-semialdehyde [(S)-ASA] and pyruvate to 4-hydroxy-tetrahydrodipicolinate (HTPA). The chain is 4-hydroxy-tetrahydrodipicolinate synthase from Helicobacter acinonychis (strain Sheeba).